The chain runs to 287 residues: Bifunctional protein FolD (287 aa).

Residues 171–173, Ile196, and Ile237 each bind NADP(+); that span reads GHS.

It belongs to the tetrahydrofolate dehydrogenase/cyclohydrolase family. In terms of assembly, homodimer.

It catalyses the reaction (6R)-5,10-methylene-5,6,7,8-tetrahydrofolate + NADP(+) = (6R)-5,10-methenyltetrahydrofolate + NADPH. The enzyme catalyses (6R)-5,10-methenyltetrahydrofolate + H2O = (6R)-10-formyltetrahydrofolate + H(+). It functions in the pathway one-carbon metabolism; tetrahydrofolate interconversion. Its function is as follows. Catalyzes the oxidation of 5,10-methylenetetrahydrofolate to 5,10-methenyltetrahydrofolate and then the hydrolysis of 5,10-methenyltetrahydrofolate to 10-formyltetrahydrofolate. The chain is Bifunctional protein FolD from Methanosarcina mazei (strain ATCC BAA-159 / DSM 3647 / Goe1 / Go1 / JCM 11833 / OCM 88) (Methanosarcina frisia).